The following is a 259-amino-acid chain: Energy-coupling factor transporter ATP-binding protein EcfA1 (259 aa).

The ABC transporter domain occupies 3–230; it reads ITLNSVSFRY…EFDDVEIPFK (228 aa). ATP is bound at residue 38–43; that stretch reads GSGKTT. E157 serves as the catalytic Proton acceptor.

The protein belongs to the ABC transporter superfamily. Energy-coupling factor EcfA family. In terms of assembly, forms a heterodimer with EcfA2. Forms a stable energy-coupling factor (ECF) transporter complex composed of 2 membrane-embedded substrate-binding proteins (S component, RibU, BioY), 2 ATP-binding proteins (A component) and 2 transmembrane proteins (T component) upon coexpression in E.coli. Stable subcomplexes with both A plus T components can also be isolated. This complex interacts with at least 2 substrate-specific components, BioY and RibU.

It is found in the cell inner membrane. In terms of biological role, ATP-binding (A) component of a common energy-coupling factor (ECF) ABC-transporter complex. Unlike classic ABC transporters this ECF transporter provides the energy necessary to transport a number of different substrates. Expression of the complex plus RibU in E.coli allows riboflavin uptake; uptake does not occur in the absence of RibU or the EcfA1A2T complex. The polypeptide is Energy-coupling factor transporter ATP-binding protein EcfA1 (Thermotoga maritima (strain ATCC 43589 / DSM 3109 / JCM 10099 / NBRC 100826 / MSB8)).